We begin with the raw amino-acid sequence, 79 residues long: Small serum protein 3 (79 aa).

A signal peptide spans 1-19 (MKVFFILIIFSFTLATCQG). Intrachain disulfides connect cysteine 21–cysteine 72, cysteine 39–cysteine 64, and cysteine 62–cysteine 71.

Its subcellular location is the secreted. Functionally, shows an slight inhibitory effect toward the metalloproteinase brevilysin H6, but does not inhibit the metalloproteinases thermolysin, HR1A and HR1B. The protein is Small serum protein 3 of Protobothrops flavoviridis (Habu).